We begin with the raw amino-acid sequence, 589 residues long: Ectoderm-neural cortex protein 1 (589 aa).

In terms of domain architecture, BTB spans 46–114 (TDVLLHAGNR…AYSSRVIINE (69 aa)). Kelch repeat units follow at residues 296–340 (ALFL…AIGC), 341–388 (KVYI…ELKH), 389–444 (CLYV…SAKL), 446–492 (LFAF…VLGN), 494–538 (IFIM…ASGN), and 539–585 (KLYV…STWK).

As to quaternary structure, binds to RB1. Hypophosphorylated RB1 associates with ENC1 during neuronal differentiation, while hyperphosphorylated RB1 associates with ENC1 in undifferentiating cells. Part of a complex that contains CUL3, RBX1 and ENC1. Interacts indirectly with KEAP1. Ubiquitinated by E3 ubiquitin ligase complex formed by CUL3 and RBX1 and probably targeted for proteasome-independent degradation. Quinone-induced oxidative stress increases its ubiquitination. Primarily expressed in the nervous system.

It localises to the nucleus matrix. Its subcellular location is the cytoplasm. The protein resides in the cytoskeleton. Functionally, actin-binding protein involved in the regulation of neuronal process formation and in differentiation of neural crest cells. Down-regulates transcription factor NF2L2/NRF2 by decreasing the rate of protein synthesis and not via a ubiquitin-mediated proteasomal degradation mechanism. The protein is Ectoderm-neural cortex protein 1 (Enc1) of Mus musculus (Mouse).